Consider the following 421-residue polypeptide: Zinc finger protein 57 (421 aa).

Residues 15 to 88 (VSYEDVAVSF…SCTGVFKGGP (74 aa)) enclose the KRAB domain. The segment at 90–113 (FFCLTCGKCFKKNTFLFNHQFPVR) adopts a C2H2-type 1; degenerate zinc-finger fold. 2 C2H2-type zinc fingers span residues 140–162 (FFCN…RRAH) and 168–190 (RSCP…LKVH). A disordered region spans residues 191 to 221 (QNKPAASNQAGNQASNQRLKSRVPPTTPRSQ). Residues 195 to 207 (AASNQAGNQASNQ) are compositionally biased toward low complexity. The C2H2-type 4 zinc-finger motif lies at 264–286 (ISCPYCHITFTMRTCLLTHLKIH). Residues 313 to 332 (YTCPVCDSSFRGKESLLDHL) form a C2H2-type 5; degenerate zinc finger. A disordered region spans residues 371-421 (GKRMESRRRRRKRACTENPETEGLSGKGRVAPWEMEGATSPESPVTEEDSD).

The protein belongs to the krueppel C2H2-type zinc-finger protein family. As to expression, expressed in oocytes and in a subset of adult tissues. Expressed at high levels in testis, and at low levels in cerebellum. Present in sciatic nerve and spinal cord (at protein level).

It localises to the nucleus. Its function is as follows. Transcription regulator required to maintain maternal and paternal gene imprinting, a process by which gene expression is restricted in a parent of origin-specific manner by epigenetic modification of genomic DNA and chromatin, including DNA methylation. Acts by controlling DNA methylation during the earliest multicellular stages of development at multiple imprinting control regions (ICRs). Acts together with ZNF445, but ZFP57 plays the predominant role in imprinting maintenance. In contrast, in humans, ZNF445 seems to be the major factor early embryonic imprinting maintenance. Required for the establishment of maternal methylation imprints at SNRPN locus. Acts as a transcriptional repressor in Schwann cells. Binds to a 5'-TGCCGC-3' consensus sequence and recognizes the methylated CpG within this element. The chain is Zinc finger protein 57 (Zfp57) from Mus musculus (Mouse).